Reading from the N-terminus, the 78-residue chain is Pigment-dispersing hormone peptides (78 aa).

Residues Met-1–Gly-22 form the signal peptide. Ala-75 carries the alanine amide modification.

Belongs to the arthropod PDH family. As to expression, expressed in eyestalk tissue and cerebral ganglia.

It localises to the secreted. Functionally, the pigment-dispersing hormone causes the migration of the distal retinal pigment into the proximal end of the pigment chromatophore cells and thus decreases the amount of light entering the retinulas. May also function as a neurotransmitter and/or neuromodulator. The polypeptide is Pigment-dispersing hormone peptides (Carcinus maenas (Common shore crab)).